Consider the following 436-residue polypeptide: UDP-glucuronate 4-epimerase 5 (436 aa).

2 consecutive transmembrane segments (helical) span residues 36-56 and 95-115; these read LTLWASLFLALFLFYLVLSPP and GLTVLVTGASGFVGTHVSIAL. An NAD(+)-binding site is contributed by 97–128; the sequence is TVLVTGASGFVGTHVSIALRRRGDGVLGLDNF. Tyrosine 247 serves as the catalytic Proton acceptor.

The protein belongs to the NAD(P)-dependent epimerase/dehydratase family. As to quaternary structure, homodimer. As to expression, in leaves, pollen and siliques, but not in roots or flowers.

It is found in the golgi apparatus. The protein resides in the golgi stack membrane. It carries out the reaction UDP-alpha-D-glucuronate = UDP-alpha-D-galacturonate. Involved in the synthesis of the negatively charged monosaccharide that forms the backbone of pectic cell wall components. The polypeptide is UDP-glucuronate 4-epimerase 5 (GAE5) (Arabidopsis thaliana (Mouse-ear cress)).